We begin with the raw amino-acid sequence, 356 residues long: MEESKKGSGLTAEKSKALAAALAQIEKQFGKGSIMRLGDGEAVEDIQVVSTGSLGLDIALGVGGLPRGRVVEIYGPESSGKTTLTLQVIAEMQKLGGTAAFIDAEHALDVQYASKLGVNVPELLISQPDTGEQALEIVDALVRSGSIDMIVIDSVAALVPKAEIEGEMGDALPGLQARLMSQALRKLTGTIKRTNCLVIFINQIRMKIGVMFGNPETTTGGNALKFYSSVRLDIRRIGSIKKNDEVIGNETRVKVVKNKVSPPFREAIFDILYGEGISRQGEIIDLGVQAKIVDKAGAWYSYSGEKIGQGKDNAREFLRENPEIAREIENRIRESLGVAAMPQGAGSEAEIMDEEE.

75–82 (GPESSGKT) serves as a coordination point for ATP.

It belongs to the RecA family.

The protein resides in the cytoplasm. Can catalyze the hydrolysis of ATP in the presence of single-stranded DNA, the ATP-dependent uptake of single-stranded DNA by duplex DNA, and the ATP-dependent hybridization of homologous single-stranded DNAs. It interacts with LexA causing its activation and leading to its autocatalytic cleavage. The protein is Protein RecA of Burkholderia mallei (strain ATCC 23344).